An 845-amino-acid polypeptide reads, in one-letter code: Disintegrin and metalloproteinase domain-containing protein 9 (845 aa).

An N-terminal signal peptide occupies residues 1–29 (MGPRALSPLASLRLRWLLACGLLGPVLEA). At 30 to 697 (GRPDLEQTVH…YNAKSTALRD (668 aa)) the chain is on the extracellular side. N-linked (GlcNAc...) asparagine glycosylation is found at Asn144, Asn154, and Asn231. A Peptidase M12B domain is found at 212-406 (RYVELFIVVD…KGGSCLLNIP (195 aa)). Cystine bridges form between Cys322-Cys401, Cys363-Cys385, Cys365-Cys370, and Cys473-Cys493. His347 contacts Zn(2+). The active site involves Glu348. Zn(2+)-binding residues include His351 and His357. Asn381, Asn487, and Asn636 each carry an N-linked (GlcNAc...) asparagine glycan. Residues 414–501 (APSCGNKLVD…FCPPDVFIQN (88 aa)) enclose the Disintegrin domain. 3 disulfide bridges follow: Cys644-Cys656, Cys650-Cys662, and Cys664-Cys673. The region spanning 644 to 698 (CDIQGKCHGHGVCNSNKNCHCEDGWAPPHCDTKGYGGSVDSGPTYNAKSTALRDG) is the EGF-like domain. A helical transmembrane segment spans residues 698-718 (GLLVFFFLIVPLVAAAIFLFI). Topologically, residues 719–845 (KRDELRKTFR…PAPPLYSSLT (127 aa)) are cytoplasmic. A disordered region spans residues 729–845 (KKRSQMSDGR…PAPPLYSSLT (117 aa)). The span at 734 to 745 (MSDGRNQANVSR) shows a compositional bias: polar residues. The span at 783 to 794 (PGGPGVSRPPPG) shows a compositional bias: pro residues.

Interacts with SH3GL2 and SNX9 through its cytoplasmic tail. Interacts with ITGA6. Requires Zn(2+) as cofactor. Proteolytically cleaved in the trans-Golgi network before it reaches the plasma membrane to generate a mature protein. The removal of the pro-domain occurs via cleavage at two different sites. Processed most likely by a pro-protein convertase such as furin, at the boundary between the pro-domain and the catalytic domain. An additional upstream cleavage pro-protein convertase site (Arg-56/Glu-57) has an important role in the activation of ADAM9. In terms of processing, phosphorylation is induced in vitro by phorbol-12-myristate-13-acetate (PMA).

It is found in the cell membrane. Synthesized as an inactive form which is proteolytically cleaved to generate an active enzyme. Processing at the upstream site is particularly important for activation of the proenzyme, whereas processing at the boundary between the pro-domain and the catalytic domain does not appear to be essential. Inhibited by hydroxamic acid-based inhibitors. Metalloprotease that cleaves and releases a number of molecules with important roles in tumorigenesis and angiogenesis, such as TEK, KDR, EPHB4, CD40, VCAM1 and CDH5. May mediate cell-cell, cell-matrix interactions and regulate the motility of cells via interactions with integrins. This Mus musculus (Mouse) protein is Disintegrin and metalloproteinase domain-containing protein 9.